Consider the following 354-residue polypeptide: Protein Wnt-11 (354 aa).

The first 24 residues, 1 to 24 (MKPSPQFFLAAFLSLILQTGICYG), serve as a signal peptide directing secretion. N-linked (GlcNAc...) asparagine glycans are attached at residues Asn-40 and Asn-90. 11 disulfide bridges follow: Cys-80-Cys-91, Cys-130-Cys-138, Cys-140-Cys-157, Cys-209-Cys-223, Cys-211-Cys-218, Cys-283-Cys-314, Cys-299-Cys-309, Cys-313-Cys-353, Cys-329-Cys-344, Cys-331-Cys-341, and Cys-336-Cys-337. The O-palmitoleoyl serine; by PORCN moiety is linked to residue Ser-215. N-linked (GlcNAc...) asparagine glycosylation is found at Asn-300 and Asn-304.

This sequence belongs to the Wnt family. Post-translationally, palmitoleoylation is required for efficient binding to frizzled receptors. Depalmitoleoylation leads to Wnt signaling pathway inhibition. Expressed in the dermatome. The expression domain is mutually exclusive to the other Wnt genes.

It localises to the secreted. The protein resides in the extracellular space. The protein localises to the extracellular matrix. Ligand for members of the frizzled family of seven transmembrane receptors. May play a role in the formation of dermal structure, both limb and feather buds. Is likely to signal over only few cell diameters. The polypeptide is Protein Wnt-11 (WNT11) (Gallus gallus (Chicken)).